The primary structure comprises 382 residues: uncharacterized protein (382 aa).

Residues 1-21 traverse the membrane as a helical segment; the sequence is MKIILVVFVLIFVGVIGFNMI.

Belongs to the membrane fusion protein (MFP) (TC 8.A.1) family.

The protein resides in the membrane. This is an uncharacterized protein from Haemophilus influenzae (strain ATCC 51907 / DSM 11121 / KW20 / Rd).